A 509-amino-acid chain; its full sequence is Maturase K (509 aa).

This sequence belongs to the intron maturase 2 family. MatK subfamily.

The protein localises to the plastid. It localises to the chloroplast. Its function is as follows. Usually encoded in the trnK tRNA gene intron. Probably assists in splicing its own and other chloroplast group II introns. This Pereskia aculeata (Barbados gooseberry) protein is Maturase K.